The following is an 869-amino-acid chain: Leucine--tRNA ligase (869 aa).

Residues 42–52 (PYPSGNLHMGH) carry the 'HIGH' region motif. The 'KMSKS' region motif lies at 622-626 (KMSKS). An ATP-binding site is contributed by Lys625.

Belongs to the class-I aminoacyl-tRNA synthetase family.

The protein localises to the cytoplasm. The catalysed reaction is tRNA(Leu) + L-leucine + ATP = L-leucyl-tRNA(Leu) + AMP + diphosphate. The polypeptide is Leucine--tRNA ligase (Synechocystis sp. (strain ATCC 27184 / PCC 6803 / Kazusa)).